A 75-amino-acid chain; its full sequence is Parvalbumin beta 3 (75 aa).

Position 1 is an N-acetylalanine (Ala-1). The 36-residue stretch at 26-61 (YKAFFAKKAFFVIDQDKSGFIEEDELKLFLQVFSAG) folds into the EF-hand domain. The Ca(2+) site is built by Asp-39, Asp-41, Ser-43, Phe-45, Glu-47, and Glu-50.

Belongs to the parvalbumin family.

Functionally, in muscle, parvalbumin is thought to be involved in relaxation after contraction. It binds two calcium ions. The chain is Parvalbumin beta 3 from Merluccius gayi (South Pacific hake).